Consider the following 684-residue polypeptide: MLKCICRVYSQPLAQMVTSPLFKHMGSAGTYTILPITNLRHLSTKNCPLKIKSNRSEPLQFGDFERQVPCSRKSGSSKNVQKRLYELRQLKTVLSETFGVTEYASFFESLRNALHINNCSENEKKKLLYDIILHQHELYPEVARKIGFYLPGEVHRWFWYRIPKSESFNHYLFLLKSDVLLFTSNYCTRFTNRLIKGTEMERQLATFQIFLHDETNIKFIMEKVLKLHTFDSLIALVNGLVKAKNFRFIKVFIQALLQKLEQHCYSGKDGAKQKNLRYVKFNNTLLYYLLKSGNVELFIKTFQEELKFIVSSGLLNHIDGNEHILNFPIHHYLNLLRISNRQEELFNVISCLQSSPLMKYKLFKEFLMGELIASFQAFRDPKLVCKYLLSSYSSKASANILNALGIWGWLYHSKSTTLTAPTLARELKNKNNILPNTMRIGSPVTVPILTELYRSLLSSSSVSLESGQFKNCLLDLYYKYKSFLSEEAHKYRYWRNDTGILNVFLNYIRFQAREPRLAYNVLLDFYSQPFAKKVVLTTTLCPFSIVAYKNHTLTQAELSELLQVMHKNGVPLTFKFCSAMVMHYVKMRDEKGARSWYNKILFGGFEIRHMALIQIIKDQGWPFPKNFDETLLTELVENNNIKEPTDSTLFTDEDMFEEDGKPRFNDDDVNKCTNIIRETLKSLN.

A mitochondrion-targeting transit peptide spans 1–56 (MLKCICRVYSQPLAQMVTSPLFKHMGSAGTYTILPITNLRHLSTKNCPLKIKSNRS).

Belongs to the ATP22 family.

The protein localises to the mitochondrion inner membrane. Translation factor specific for subunit 6 of the mitochondrial ATPase. Required for assembly of the CF(0) component of the ATPase. The polypeptide is Mitochondrial translation factor ATP22 (ATP22) (Saccharomyces cerevisiae (strain AWRI1631) (Baker's yeast)).